The primary structure comprises 74 residues: uncharacterized protein (74 aa).

Residues 7–26 (IHLYVMASAMSSSPIFFFFQ) traverse the membrane as a helical segment.

The protein localises to the membrane. This is an uncharacterized protein from Homo sapiens (Human).